We begin with the raw amino-acid sequence, 186 residues long: ATP synthase subunit delta (186 aa).

This sequence belongs to the ATPase delta chain family. F-type ATPases have 2 components, F(1) - the catalytic core - and F(0) - the membrane proton channel. F(1) has five subunits: alpha(3), beta(3), gamma(1), delta(1), epsilon(1). F(0) has three main subunits: a(1), b(2) and c(10-14). The alpha and beta chains form an alternating ring which encloses part of the gamma chain. F(1) is attached to F(0) by a central stalk formed by the gamma and epsilon chains, while a peripheral stalk is formed by the delta and b chains.

The protein resides in the cell membrane. Functionally, f(1)F(0) ATP synthase produces ATP from ADP in the presence of a proton or sodium gradient. F-type ATPases consist of two structural domains, F(1) containing the extramembraneous catalytic core and F(0) containing the membrane proton channel, linked together by a central stalk and a peripheral stalk. During catalysis, ATP synthesis in the catalytic domain of F(1) is coupled via a rotary mechanism of the central stalk subunits to proton translocation. In terms of biological role, this protein is part of the stalk that links CF(0) to CF(1). It either transmits conformational changes from CF(0) to CF(1) or is implicated in proton conduction. This Wolbachia sp. subsp. Brugia malayi (strain TRS) protein is ATP synthase subunit delta.